The primary structure comprises 328 residues: MSEKIYEYKDENNWFIGKMTGHNLISGWGVKHTTIKKIDDLLDGIAATLDWENPKGYDVSVVRHQSPLSLITFIIDMINQETQREIKVTPHAGTILLMENAKLLAVYLPEGGVSTATFFATSEQGFGDIILIATRNEGKTKEFRNLFGQLGYRVENLNDYPELPEVAETGTTFEENARLKAETISRLTGKMVLADDSGLKVDALGGLPGVWSARFSGPDATDAKNNAKLLHELAMVFDQKKRSAQFHTTLVVAAPNKDSLVVEADWPGYIATQPKGENGFGYDPVFIVGETGHHAAELEADQKNQLSHRGQAVRKLMEVFPAWQAKQS.

The unknown stretch occupies residues 1-129 (MSEKIYEYKD…ATSEQGFGDI (129 aa)). Positions 130–324 (ILIATRNEGK…KLMEVFPAWQ (195 aa)) are NTP pyrophosphatase. 134-139 (TRNEGK) is a substrate binding site. Residue Asp196 is the Proton acceptor of the active site. Asp196 serves as a coordination point for Mg(2+). Substrate-binding positions include Ser197, 280 to 283 (FGYD), Lys303, and 308 to 309 (HR).

The protein belongs to the HAM1 NTPase family. As to quaternary structure, homodimer. Mg(2+) is required as a cofactor.

It carries out the reaction XTP + H2O = XMP + diphosphate + H(+). The enzyme catalyses dITP + H2O = dIMP + diphosphate + H(+). The catalysed reaction is ITP + H2O = IMP + diphosphate + H(+). Pyrophosphatase that catalyzes the hydrolysis of nucleoside triphosphates to their monophosphate derivatives, with a high preference for the non-canonical purine nucleotides XTP (xanthosine triphosphate), dITP (deoxyinosine triphosphate) and ITP. Seems to function as a house-cleaning enzyme that removes non-canonical purine nucleotides from the nucleotide pool, thus preventing their incorporation into DNA/RNA and avoiding chromosomal lesions. The protein is dITP/XTP pyrophosphatase of Streptococcus pyogenes serotype M1.